We begin with the raw amino-acid sequence, 756 residues long: U3 small nucleolar RNA-associated protein 25 homolog (756 aa).

The interval 1–159 is disordered; it reads MGKRGSRSQS…SQTSPEEFTD (159 aa). Promotes p53/TP53 degradation stretches follow at residues 1–185 and 573–635; these read MGKR…SLKA and VQLP…KKEE. Residue Ser-10 is modified to Phosphoserine. The span at 25 to 43 shows a compositional bias: basic and acidic residues; it reads RDFGEEHPFYDRVSRKEAK. Ser-50, Ser-52, Ser-58, Ser-60, Ser-62, and Ser-64 each carry phosphoserine. Composition is skewed to acidic residues over residues 54 to 64 and 84 to 121; these read DSSDSESDSES and EEEE…EEMA. The interval 636–697 is represses p53/TP53 degradation; the sequence is LNFTHICEYT…YELPTYPHFY (62 aa).

The protein belongs to the UTP25 family. Interacts with CAPN3; the interaction is required for CAPN3 translocation to the nucleolus. Phosphorylated. Phosphorylation is required to promote p53/TP53 degradation in the nucleolus which promotes cell cycle progression and liver development. As to expression, expressed in colon.

It is found in the nucleus. The protein localises to the nucleolus. Component of the ribosomal small subunit processome for the biogenesis of ribosomes, functions in pre-ribosomal RNA (pre-rRNA) processing. Essential for embryonic development in part through the regulation of p53 pathway. Controls the expansion growth of digestive organs and liver. Also involved in the sympathetic neuronal development. Mediates, with CAPN3, the proteasome-independent degradation of p53/TP53. This is U3 small nucleolar RNA-associated protein 25 homolog from Homo sapiens (Human).